The sequence spans 187 residues: Transmembrane protein 11-A, mitochondrial (187 aa).

Helical transmembrane passes span 79 to 95 (TAVLSGTACLLTPLALP) and 102 to 119 (VSLPAGVLSLACSTLYGI).

It belongs to the TMEM11 family.

It localises to the mitochondrion inner membrane. In terms of biological role, plays a role in mitochondrial morphogenesis. The protein is Transmembrane protein 11-A, mitochondrial (tmem11-a) of Xenopus laevis (African clawed frog).